A 277-amino-acid polypeptide reads, in one-letter code: Ribosomal RNA small subunit methyltransferase I (277 aa).

The protein belongs to the methyltransferase superfamily. RsmI family.

It localises to the cytoplasm. It catalyses the reaction cytidine(1402) in 16S rRNA + S-adenosyl-L-methionine = 2'-O-methylcytidine(1402) in 16S rRNA + S-adenosyl-L-homocysteine + H(+). Functionally, catalyzes the 2'-O-methylation of the ribose of cytidine 1402 (C1402) in 16S rRNA. This Mycoplasma genitalium (strain ATCC 33530 / DSM 19775 / NCTC 10195 / G37) (Mycoplasmoides genitalium) protein is Ribosomal RNA small subunit methyltransferase I.